A 627-amino-acid chain; its full sequence is Sodium- and chloride-dependent GABA transporter 3 (627 aa).

Residues 1–36 (MTAEQALPLGNGKAAEEARGSEALGGGGGGAAGTRE) form a disordered region. The Cytoplasmic portion of the chain corresponds to 1–53 (MTAEQALPLGNGKAAEEARGSEALGGGGGGAAGTREARDKAVHERGHWNNKVE). The residue at position 21 (Ser21) is a Phosphoserine. Positions 23 to 32 (ALGGGGGGAA) are enriched in gly residues. The next 3 membrane-spanning stretches (helical) occupy residues 54-74 (FVLS…FPYL), 82-101 (AFLI…VFFL), and 126-146 (GIGY…IIIL). At 147–220 (AWAIFYLSNC…DGIEHIGNLR (74 aa)) the chain is on the extracellular side. N-linked (GlcNAc...) asparagine glycans are attached at residues Asn182, Asn185, and Asn193. 9 consecutive transmembrane segments (helical) span residues 221–239 (WELA…FCIW), 248–265 (VVYV…ILLI), 301–318 (IFFS…LGSY), 330–351 (IMLC…FSVL), 384–403 (MPLS…FLGL), 433–451 (LLIL…VMLT), 468–488 (GMCL…VYGS), 509–528 (WCWK…FFLV), and 548–566 (IGWL…WIFI). Over 567-627 (KLWKTEGTLP…SAITEKETHF (61 aa)) the chain is Cytoplasmic.

This sequence belongs to the sodium:neurotransmitter symporter (SNF) (TC 2.A.22) family. SLC6A11 subfamily. As to expression, brain and retina. Expressed predominantly within neurons. Expressed in the hippocampus (at protein level).

It is found in the cell membrane. The enzyme catalyses 4-aminobutanoate(out) + chloride(out) + 2 Na(+)(out) = 4-aminobutanoate(in) + chloride(in) + 2 Na(+)(in). It carries out the reaction taurine(out) + chloride(out) + 2 Na(+)(out) = taurine(in) + chloride(in) + 2 Na(+)(in). The catalysed reaction is beta-alanine(out) + chloride(out) + 2 Na(+)(out) = beta-alanine(in) + chloride(in) + 2 Na(+)(in). It catalyses the reaction hypotaurine(out) + chloride(out) + 2 Na(+)(out) = hypotaurine(in) + chloride(in) + 2 Na(+)(in). GABA transport is inhibited by beta-alanine. Its function is as follows. Mediates sodium- and chloride-dependent transport of gamma-aminobutyric acid (GABA). Can also mediate transport of beta-alanine and to a lower extent that of taurine and hypotaurine. This Rattus norvegicus (Rat) protein is Sodium- and chloride-dependent GABA transporter 3 (Slc6a11).